We begin with the raw amino-acid sequence, 392 residues long: Elongation factor Tu (392 aa).

The tr-type G domain maps to 10–202 (KVHVNVGTIG…VLDEYIEDPI (193 aa)). The segment at 19 to 26 (GHVDHGKT) is G1. 19-26 (GHVDHGKT) serves as a coordination point for GTP. Threonine 26 is a binding site for Mg(2+). Residues 60–64 (GITIN) are G2. Residues 81 to 84 (DCPG) form a G3 region. GTP is bound by residues 81-85 (DCPGH) and 136-139 (NKCD). Residues 136 to 139 (NKCD) are G4. The tract at residues 174-176 (SAL) is G5.

The protein belongs to the TRAFAC class translation factor GTPase superfamily. Classic translation factor GTPase family. EF-Tu/EF-1A subfamily. As to quaternary structure, monomer.

Its subcellular location is the cytoplasm. It catalyses the reaction GTP + H2O = GDP + phosphate + H(+). Functionally, GTP hydrolase that promotes the GTP-dependent binding of aminoacyl-tRNA to the A-site of ribosomes during protein biosynthesis. This is Elongation factor Tu from Apple proliferation phytoplasma.